The chain runs to 501 residues: Rhazimal synthase (501 aa).

The helical transmembrane segment at 4-24 (MQLSFASAVVYSLIFFVFLLV) threads the bilayer. N-linked (GlcNAc...) asparagine glycosylation is present at Asn-282. Cys-442 lines the heme pocket.

It belongs to the cytochrome P450 family. It depends on heme as a cofactor.

Its subcellular location is the membrane. The enzyme catalyses (19E)-geissoschizine + reduced [NADPH--hemoprotein reductase] + O2 = rhazimal + oxidized [NADPH--hemoprotein reductase] + 2 H2O + H(+). It carries out the reaction (19E)-geissoschizine + reduced [NADPH--hemoprotein reductase] + O2 = akuammicine + formate + oxidized [NADPH--hemoprotein reductase] + H2O + H(+). It functions in the pathway alkaloid biosynthesis. A cytochrome P450 monooxygenase involved in the biosynthesis of akuammilan monoterpene indole alkaloids (MIAs) natural products, components with various biological properties such as antidiabetic, antibacterial, anti-inflammatory, anticancer, and antimalarial activities. Catalyzes the conversion of geissoschizine to rhazimal. Can also, with lower efficiency, support the conversion of geissoschizine to akuammicine. In Alstonia scholaris (Dogbane), this protein is Rhazimal synthase.